Reading from the N-terminus, the 146-residue chain is Ribosome-binding factor A (146 aa).

The interval 127-146 is disordered; it reads EFAGEADPYKKPEDDEAAES.

Belongs to the RbfA family. Monomer. Binds 30S ribosomal subunits, but not 50S ribosomal subunits or 70S ribosomes.

The protein localises to the cytoplasm. Its function is as follows. One of several proteins that assist in the late maturation steps of the functional core of the 30S ribosomal subunit. Associates with free 30S ribosomal subunits (but not with 30S subunits that are part of 70S ribosomes or polysomes). Required for efficient processing of 16S rRNA. May interact with the 5'-terminal helix region of 16S rRNA. The protein is Ribosome-binding factor A of Renibacterium salmoninarum (strain ATCC 33209 / DSM 20767 / JCM 11484 / NBRC 15589 / NCIMB 2235).